The sequence spans 483 residues: Cytochrome P450 monooxygenase stcF (483 aa).

Residue C424 coordinates heme.

This sequence belongs to the cytochrome P450 family. Requires heme as cofactor.

It participates in mycotoxin biosynthesis; sterigmatocystin biosynthesis. In terms of biological role, cytochrome P450 monooxygenase; part of the gene cluster that mediates the biosynthesis of sterigmatocystin (ST), a polyketide-derived furanocoumarin which is part of the most toxic and carcinogenic compounds among the known mycotoxins. The first step in the biosynthesis of sterigmatocystin is the production of hexanoate by the fatty acid synthase (FAS) units stcJ and stcK. The polyketide backbone is assembled by the non-reducing polyketide synthase stcA by condensation of the starter hexanoyl-CoA and 7 malonyl-CoA extender units followed by cyclization and release of norsolorinic acid. Norsolorinic acid is the first stable intermediate in the biosynthesis of sterigmatocystin and is converted into averantin (AVN) by the ketoreductase stcE which reduces the hexanoate ketone to an alcohol. Averantin is then oxidized into 5'-hydroxyaverantin (HAVN) by the cytochrome P450 monooxygenase stcF. 5'-hydroxyaverantin is further converted to 5'-oxyaverantin (OAVN) by the 5'-hydroxyaverantin dehydrogenase stcG. The next step is the conversion of OAVN into averufin (AVF) which is catalyzed by a yet to be identified enzyme. The cytochrome P450 monooxygenase stcB and the flavin-binding monooxygenase stcW are both required for the conversion of averufin to 1-hydroxyversicolorone. The esterase stcI probably catalyzes the formation of versiconal hemiacetal acetate from 1-hydroxyversicolorone. The oxydoreductase stcN then probably catalyzes the biosynthetic step from versiconal to versicolorin B (VERB). The next step is performed by the versicolorin B desaturase stcL to produce versicolorin A (VERA). The ketoreductase stcU and the cytochrome P450 monooxygenase stcS are involved in the conversion of versicolorin A to demethylsterigmatocystin. The Baeyer-Villiger oxidas stcQ and the reductase stcR might be involved in the biosynthetic step from versicolorin A to demethylsterigmatocystin. The final step in the biosynthesis of sterigmatocystin is the methylation of demethylsterigmatocystin catalyzed by the methyltransferase stcP. The polypeptide is Cytochrome P450 monooxygenase stcF (Emericella nidulans (strain FGSC A4 / ATCC 38163 / CBS 112.46 / NRRL 194 / M139) (Aspergillus nidulans)).